We begin with the raw amino-acid sequence, 69 residues long: Large ribosomal subunit protein uL30 (69 aa).

The protein belongs to the universal ribosomal protein uL30 family. In terms of assembly, part of the 50S ribosomal subunit.

In Rhizobium etli (strain CIAT 652), this protein is Large ribosomal subunit protein uL30.